A 245-amino-acid polypeptide reads, in one-letter code: Lytic switch protein BZLF1 (245 aa).

The interval 1 to 167 is transactivation; sequence MMDPNSTSED…RTRKPLQPES (167 aa). Thr-14 and Thr-159 each carry phosphothreonine. A disordered region spans residues 145–167; sequence GAPQPAPAAAPARRTRKPLQPES. The Bipartite nuclear localization signal motif lies at 157–194; that stretch reads RRTRKPLQPESLEECDSELEIKRYKNRVASRKCRAKFK. Ser-167, Ser-173, and Ser-186 each carry phosphoserine. The interval 178–195 is basic motif; that stretch reads KRYKNRVASRKCRAKFKH. The 51-residue stretch at 178–228 folds into the bZIP domain; sequence KRYKNRVASRKCRAKFKHLLQHYREVASAKSSENDRLRLLLKQMCPSLDVD. The tract at residues 196–228 is leucine-zipper; that stretch reads LLQHYREVASAKSSENDRLRLLLKQMCPSLDVD. The accessory activation domain stretch occupies residues 229–245; sequence SIIPRTPDVLHEDLLNF.

The protein belongs to the bZIP family. Homodimer. Interacts (via b-ZIP domain) with the DNA polymerase processivity factor BMRF1 (via N-terminus); this interaction may inhibit BZLF1-induced transcription of the BMRF1 promoter. Interacts with human UBN1, CRTC2 and RACK1. Interacts (via N-terminus) with human PAX5 (via N-terminus); this interaction inhibits BZLF1-mediated lytic viral reactivation. Interacts (via leucine-zipper domain) with host CEBPA; this interaction induces G1 host cell cycle arrest. Interacts (via C-terminus) with host TP53BP1 (via C-terminus); this interaction is involved in the activation of the viral lytic cycle. Interacts with host chromatin-remodeling ATPase INO80; this interaction participates to the activation of early lytic viral genes by BZLF1. Interacts with host regulator of chromatin SMARCA5/hSNF2H; this interaction participates to the activation of early lytic viral genes by BZLF1. Interacts with host PLSCR1/Phospholipid scramblase 1; this interaction negatively regulates the transcriptional regulatory activity of BZLF1 by preventing the formation of the BZLF1-CBP complex.

It localises to the host nucleus. In terms of biological role, transcription factor that acts as a molecular switch to induce the transition from the latent to the lytic or productive phase of the virus cycle. Mediates the switch from the latent to the lytic cycle of infection in cells containing a highly methylated viral genome. Probably binds to silenced chromatin and recruits host chromatin-remodeling enzymes. Regulates this switch by binding to 2 types of ZEBRA response elements (ZREs): the CpG-free AP-1 like elements (latency) and the methylated CpG-containing elements (lytic replication). Activates preferentially the methylated forms of the viral lytic R (BRLF1) and Na (BRRF1) gene promoters, the latters being the first genes activated during Z-mediated reactivation in latently infected cells. BZLF1 and BRLF1 act together to trigger lytic replication. Also binds the lytic origin of replication, oriLyt. Induces G1 cell cycle arrest by stabilizing the host CCAAT/enhancer binding protein CEBPA. This function is important because the lytic cycle preferentially takes place in host cells arrested in G1. This Homo sapiens (Human) protein is Lytic switch protein BZLF1.